The sequence spans 341 residues: Solute carrier family 25 member 43 (341 aa).

Solcar repeat units follow at residues 11-101, 105-185, and 200-298; these read TGGQ…TDDL, SQWS…LLVY, and SLPQ…LYQN. A run of 6 helical transmembrane segments spans residues 16–36, 68–88, 110–130, 166–186, 205–225, and 262–282; these read LLCA…LELA, LWKG…VQLA, IMAG…TDLI, GVSL…LVYM, FANV…FETV, and VLGL…YFGI.

Belongs to the mitochondrial carrier (TC 2.A.29) family.

It is found in the mitochondrion inner membrane. This Homo sapiens (Human) protein is Solute carrier family 25 member 43 (SLC25A43).